A 325-amino-acid chain; its full sequence is Aldo-keto reductase family 1 member A1 (325 aa).

At A2 the chain carries N-acetylalanine. Residue S4 is modified to Phosphoserine. NADP(+) is bound by residues 11–20 (GQKMPLIGLG), T21, and W22. S38 bears the Phosphoserine mark. Residue D45 participates in NADP(+) binding. The active-site Proton donor is Y50. K127 carries the N6-acetyllysine; alternate modification. At K127 the chain carries N6-succinyllysine; alternate. Residue K145 is modified to N6-succinyllysine. NADP(+) is bound by residues S162, N163, S211, L213, S215, S216, K263, S264, I265, T266, R269, Q272, and N273. S211 carries the post-translational modification Phosphoserine.

Belongs to the aldo/keto reductase family.

It is found in the cytoplasm. Its subcellular location is the cytosol. The protein localises to the apical cell membrane. It catalyses the reaction a primary alcohol + NADP(+) = an aldehyde + NADPH + H(+). The enzyme catalyses L-gulonate + NADP(+) = aldehydo-D-glucuronate + NADPH + H(+). It carries out the reaction L-gulono-1,4-lactone + NADP(+) = D-glucurono-3,6-lactone + NADPH + H(+). The catalysed reaction is allyl alcohol + NADP(+) = acrolein + NADPH + H(+). It catalyses the reaction glycerol + NADP(+) = D-glyceraldehyde + NADPH + H(+). The enzyme catalyses glycerol + NADP(+) = L-glyceraldehyde + NADPH + H(+). It carries out the reaction hydroxyacetone + NADP(+) = methylglyoxal + NADPH + H(+). The catalysed reaction is 3-deoxyfructose + NADP(+) = 3-deoxyglucosone + NADPH + H(+). It catalyses the reaction (R)-mevalonate + NADP(+) = (R)-mevaldate + NADPH + H(+). The enzyme catalyses pyridine 3-methanol + NADP(+) = pyridine-3-carbaldehyde + NADPH + H(+). It carries out the reaction S-nitroso-CoA + NADPH + H(+) = sulfinamide-CoA + NADP(+). The catalysed reaction is S-nitrosoglutathione + NADPH + H(+) = S-(hydroxysulfenamide)glutathione + NADP(+). In terms of biological role, catalyzes the NADPH-dependent reduction of a wide variety of carbonyl-containing compounds to their corresponding alcohols. Displays enzymatic activity towards endogenous metabolites such as aromatic and aliphatic aldehydes, ketones, monosaccharides and bile acids, with a preference for negatively charged substrates, such as glucuronate and succinic semialdehyde. Functions as a detoxifiying enzyme by reducing a range of toxic aldehydes. Reduces methylglyoxal and 3-deoxyglucosone, which are present at elevated levels under hyperglycemic conditions and are cytotoxic. Involved also in the detoxification of lipid-derived aldehydes like acrolein. Plays a role in the activation of procarcinogens, such as polycyclic aromatic hydrocarbon trans-dihydrodiols, and in the metabolism of various xenobiotics and drugs. Also acts as an inhibitor of protein S-nitrosylation by mediating degradation of S-nitroso-coenzyme A (S-nitroso-CoA), a cofactor required to S-nitrosylate proteins. S-nitroso-CoA reductase activity is involved in reprogramming intermediary metabolism in renal proximal tubules, notably by inhibiting protein S-nitrosylation of isoform 2 of PKM (PKM2). Also acts as a S-nitroso-glutathione reductase by catalyzing the NADPH-dependent reduction of S-nitrosoglutathione. Displays no reductase activity towards retinoids. In Pongo abelii (Sumatran orangutan), this protein is Aldo-keto reductase family 1 member A1 (AKR1A1).